A 233-amino-acid chain; its full sequence is Translation initiation factor IF-3 (233 aa).

Disordered regions lie at residues 1 to 21 (MAIQHRDPRGGGGSRDARTNR) and 184 to 233 (LQSQ…AAQR). Residues 193–211 (AAAAAAPAAAPAAPAAGAP) show a composition bias toward low complexity. Positions 212–223 (APAPAPAAPAPA) are enriched in pro residues. Residues 224–233 (PAAADPAAQR) are compositionally biased toward low complexity.

Belongs to the IF-3 family. As to quaternary structure, monomer.

It localises to the cytoplasm. IF-3 binds to the 30S ribosomal subunit and shifts the equilibrium between 70S ribosomes and their 50S and 30S subunits in favor of the free subunits, thus enhancing the availability of 30S subunits on which protein synthesis initiation begins. The chain is Translation initiation factor IF-3 from Anaeromyxobacter dehalogenans (strain 2CP-C).